The primary structure comprises 141 residues: HTH-type transcriptional regulator LrpA (141 aa).

Residues 2 to 63 (IDERDKIILE…RINPKKLGYS (62 aa)) enclose the HTH asnC-type domain. Positions 21–40 (FTEIAKKLGISETAVRKRVK) form a DNA-binding region, H-T-H motif.

As to quaternary structure, homooctamer; tetramer of dimers.

Its function is as follows. DNA-binding protein that negatively regulates its own transcription. Interferes with RNA polymerase (RNAP) recruitment by inhibiting the association of RNAP with the TBP-TFB promoter complex. This is HTH-type transcriptional regulator LrpA (lrpA) from Pyrococcus horikoshii (strain ATCC 700860 / DSM 12428 / JCM 9974 / NBRC 100139 / OT-3).